The primary structure comprises 338 residues: 2,3-dihydroxybenzoate decarboxylase (338 aa).

Cys-251 is a catalytic residue.

This sequence belongs to the metallo-dependent hydrolases superfamily. In terms of assembly, homotetramer.

The enzyme catalyses 2,3-dihydroxybenzoate + H(+) = catechol + CO2. It participates in aromatic compound metabolism; benzoate degradation via hydroxylation. Has an absolute substrate specificity for 2,3-DHBA. The protein is 2,3-dihydroxybenzoate decarboxylase of Aspergillus oryzae (strain ATCC 42149 / RIB 40) (Yellow koji mold).